We begin with the raw amino-acid sequence, 332 residues long: 2,3-diketo-L-gulonate reductase (332 aa).

Catalysis depends on histidine 44, which acts as the Proton donor. Residues 168-174 (ITMVDMS), 224-225 (WK), and 304-306 (GHE) each bind NAD(+).

Belongs to the LDH2/MDH2 oxidoreductase family. DlgD subfamily. Homodimer.

It is found in the cytoplasm. The enzyme catalyses 3-dehydro-L-gulonate + NAD(+) = 2,3-dioxo-L-gulonate + NADH + H(+). It catalyses the reaction 3-dehydro-L-gulonate + NADP(+) = 2,3-dioxo-L-gulonate + NADPH + H(+). Its function is as follows. Catalyzes the reduction of 2,3-diketo-L-gulonate in the presence of NADH, to form 3-keto-L-gulonate. The chain is 2,3-diketo-L-gulonate reductase from Pasteurella multocida (strain Pm70).